Consider the following 445-residue polypeptide: Oxysterols receptor LXR-alpha (445 aa).

Disordered regions lie at residues 1-34 (MSLW…QGGN) and 63-86 (ALLP…KKGP). Residues 1 to 94 (MSLWLEASMP…GPAPKMLGNE (94 aa)) form a transactivation AF-1; required for ligand-independent transactivation function region. Positions 93-168 (NELCSVCGDK…AGMREECVLS (76 aa)) form a DNA-binding region, nuclear receptor. 2 NR C4-type zinc fingers span residues 96 to 116 (CSVC…CEGC) and 132 to 156 (CHSG…LRKC). At S191 the chain carries Phosphoserine. Positions 203–445 (QLSPEQLGMI…LLSEIWDVHE (243 aa)) are transactivation AF-2; required for ligand-dependent transactivation function; mediates interaction with CCAR2. Positions 207 to 445 (EQLGMIEKLV…LLSEIWDVHE (239 aa)) constitute an NR LBD domain.

It belongs to the nuclear hormone receptor family. NR1 subfamily. In terms of assembly, heterodimer of NR1H3 and RXR (retinoic acid receptor). Interacts with CCAR2 (via N-terminus) in a ligand-independent manner. Interacts with SIRT1 and this interaction is inhibited by CCAR2. Post-translationally, ubiquitinated. Ubiquitination by UBR5 leads to its degradation: UBR5 specifically recognizes and binds ligand-bound NR1H3 when it is not associated with coactivators (NCOAs). In presence of NCOAs, the UBR5-degron is not accessible, preventing its ubiquitination and degradation.

The protein resides in the nucleus. It localises to the cytoplasm. Functionally, nuclear receptor that exhibits a ligand-dependent transcriptional activation activity. Interaction with retinoic acid receptor (RXR) shifts RXR from its role as a silent DNA-binding partner to an active ligand-binding subunit in mediating retinoid responses through target genes defined by LXRES. LXRES are DR4-type response elements characterized by direct repeats of two similar hexanuclotide half-sites spaced by four nucleotides. Plays an important role in the regulation of cholesterol homeostasis, regulating cholesterol uptake through MYLIP-dependent ubiquitination of LDLR, VLDLR and LRP8. Interplays functionally with RORA for the regulation of genes involved in liver metabolism. Induces LPCAT3-dependent phospholipid remodeling in endoplasmic reticulum (ER) membranes of hepatocytes, driving SREBF1 processing and lipogenesis. Via LPCAT3, triggers the incorporation of arachidonate into phosphatidylcholines of ER membranes, increasing membrane dynamics and enabling triacylglycerols transfer to nascent very low-density lipoprotein (VLDL) particles. Via LPCAT3 also counteracts lipid-induced ER stress response and inflammation, likely by modulating SRC kinase membrane compartmentalization and limiting the synthesis of lipid inflammatory mediators. This is Oxysterols receptor LXR-alpha (Nr1h3) from Mus musculus (Mouse).